Reading from the N-terminus, the 380-residue chain is Two-component response regulator ORR28 (380 aa).

Residues 13 to 130 (SAMVIDEDKC…TIQNLWQHLD (118 aa)) enclose the Response regulatory domain. The residue at position 65 (Asp65) is a 4-aspartylphosphate. Positions 169–223 (RKYYLMWTPHLQKKFLHALEILGEGQISLMIMDVDNIDRKQISTHLQKHRLQLKK) form a DNA-binding region, myb-like GARP. The interval 225–245 (LSKASFTKGSNEDTSNPSAKN) is disordered. Positions 228–245 (ASFTKGSNEDTSNPSAKN) are enriched in polar residues.

Belongs to the ARR family. Type-B subfamily. Two-component system major event consists of a His-to-Asp phosphorelay between a sensor histidine kinase (HK) and a response regulator (RR). In plants, the His-to-Asp phosphorelay involves an additional intermediate named Histidine-containing phosphotransfer protein (HPt). This multistep phosphorelay consists of a His-Asp-His-Asp sequential transfer of a phosphate group between first a His and an Asp of the HK protein, followed by the transfer to a conserved His of the HPt protein and finally the transfer to an Asp in the receiver domain of the RR protein.

It localises to the nucleus. Functionally, transcriptional activator that binds specific DNA sequence. Functions as a response regulator involved in His-to-Asp phosphorelay signal transduction system. Phosphorylation of the Asp residue in the receiver domain activates the ability of the protein to promote the transcription of target genes. May directly activate some type-A response regulators in response to cytokinins. This Oryza sativa subsp. indica (Rice) protein is Two-component response regulator ORR28.